Reading from the N-terminus, the 164-residue chain is ATP synthase subunit b 2 (164 aa).

A helical membrane pass occupies residues 4–24 (TFWAFVGLVLFLALLAYFKVP).

It belongs to the ATPase B chain family. As to quaternary structure, F-type ATPases have 2 components, F(1) - the catalytic core - and F(0) - the membrane proton channel. F(1) has five subunits: alpha(3), beta(3), gamma(1), delta(1), epsilon(1). F(0) has three main subunits: a(1), b(2) and c(10-14). The alpha and beta chains form an alternating ring which encloses part of the gamma chain. F(1) is attached to F(0) by a central stalk formed by the gamma and epsilon chains, while a peripheral stalk is formed by the delta and b chains.

It localises to the cell inner membrane. In terms of biological role, f(1)F(0) ATP synthase produces ATP from ADP in the presence of a proton or sodium gradient. F-type ATPases consist of two structural domains, F(1) containing the extramembraneous catalytic core and F(0) containing the membrane proton channel, linked together by a central stalk and a peripheral stalk. During catalysis, ATP synthesis in the catalytic domain of F(1) is coupled via a rotary mechanism of the central stalk subunits to proton translocation. Component of the F(0) channel, it forms part of the peripheral stalk, linking F(1) to F(0). The sequence is that of ATP synthase subunit b 2 from Bartonella quintana (strain Toulouse) (Rochalimaea quintana).